Reading from the N-terminus, the 109-residue chain is Flagellar hook-basal body complex protein FliE (109 aa).

It belongs to the FliE family.

It is found in the bacterial flagellum basal body. The polypeptide is Flagellar hook-basal body complex protein FliE (Nitrosomonas eutropha (strain DSM 101675 / C91 / Nm57)).